The primary structure comprises 363 residues: Ribosomal RNA large subunit methyltransferase M (363 aa).

Residues Ser-190, 223–226 (CPGG), Asp-242, Asp-262, and Asp-279 each bind S-adenosyl-L-methionine. The active-site Proton acceptor is Lys-308.

Belongs to the class I-like SAM-binding methyltransferase superfamily. RNA methyltransferase RlmE family. RlmM subfamily. As to quaternary structure, monomer.

Its subcellular location is the cytoplasm. The enzyme catalyses cytidine(2498) in 23S rRNA + S-adenosyl-L-methionine = 2'-O-methylcytidine(2498) in 23S rRNA + S-adenosyl-L-homocysteine + H(+). Catalyzes the 2'-O-methylation at nucleotide C2498 in 23S rRNA. The protein is Ribosomal RNA large subunit methyltransferase M of Aliivibrio salmonicida (strain LFI1238) (Vibrio salmonicida (strain LFI1238)).